We begin with the raw amino-acid sequence, 210 residues long: Interleukin-6 (210 aa).

Residues 1–25 (MNSLSTSAFSPVAFSLGLLLVMATA) form the signal peptide. A disulfide bridge links cysteine 72 with cysteine 78. Serine 81 is modified (phosphoserine). Cysteine 101 and cysteine 111 are oxidised to a cystine.

It belongs to the IL-6 superfamily. Component of a hexamer of two molecules each of IL6, IL6R and IL6ST; first binds to IL6R to associate with the signaling subunit IL6ST. Interacts with IL6R (via the N-terminal ectodomain); this interaction may be affected by IL6R-binding with SORL1, hence decreasing IL6 cis signaling. Interacts with SORL1 (via the N-terminal ectodomain); this interaction leads to IL6 internalization and lysosomal degradation. May form a trimeric complex with the soluble SORL1 ectodomain and soluble IL6R receptor; this interaction might stabilize circulating IL6, hence promoting IL6 trans signaling.

It localises to the secreted. Cytokine with a wide variety of biological functions in immunity, tissue regeneration, and metabolism. Binds to IL6R, then the complex associates to the signaling subunit IL6ST/gp130 to trigger the intracellular IL6-signaling pathway. The interaction with the membrane-bound IL6R and IL6ST stimulates 'classic signaling', whereas the binding of IL6 and soluble IL6R to IL6ST stimulates 'trans-signaling'. Alternatively, 'cluster signaling' occurs when membrane-bound IL6:IL6R complexes on transmitter cells activate IL6ST receptors on neighboring receiver cells. In terms of biological role, IL6 is a potent inducer of the acute phase response. Rapid production of IL6 contributes to host defense during infection and tissue injury, but excessive IL6 synthesis is involved in disease pathology. In the innate immune response, is synthesized by myeloid cells, such as macrophages and dendritic cells, upon recognition of pathogens through toll-like receptors (TLRs) at the site of infection or tissue injury. In the adaptive immune response, is required for the differentiation of B cells into immunoglobulin-secreting cells. Plays a major role in the differentiation of CD4(+) T cell subsets. Essential factor for the development of T follicular helper (Tfh) cells that are required for the induction of germinal-center formation. Required to drive naive CD4(+) T cells to the Th17 lineage. Also required for proliferation of myeloma cells and the survival of plasmablast cells. Functionally, acts as an essential factor in bone homeostasis and on vessels directly or indirectly by induction of VEGF, resulting in increased angiogenesis activity and vascular permeability. Induces, through 'trans-signaling' and synergistically with IL1B and TNF, the production of VEGF. Involved in metabolic controls, is discharged into the bloodstream after muscle contraction increasing lipolysis and improving insulin resistance. 'Trans-signaling' in central nervous system also regulates energy and glucose homeostasis. Mediates, through GLP-1, crosstalk between insulin-sensitive tissues, intestinal L cells and pancreatic islets to adapt to changes in insulin demand. Also acts as a myokine. Plays a protective role during liver injury, being required for maintenance of tissue regeneration. Also has a pivotal role in iron metabolism by regulating HAMP/hepcidin expression upon inflammation or bacterial infection. Through activation of IL6ST-YAP-NOTCH pathway, induces inflammation-induced epithelial regeneration. This chain is Interleukin-6 (IL6), found in Mustela putorius furo (European domestic ferret).